We begin with the raw amino-acid sequence, 46 residues long: uncharacterized protein (46 aa).

It is found in the mitochondrion. This is an uncharacterized protein from Saccharomyces cerevisiae (strain ATCC 204508 / S288c) (Baker's yeast).